The primary structure comprises 202 residues: ATP-dependent Clp protease proteolytic subunit (202 aa).

Serine 101 functions as the Nucleophile in the catalytic mechanism. Histidine 126 is an active-site residue.

The protein belongs to the peptidase S14 family. In terms of assembly, component of the chloroplastic Clp protease core complex.

Its subcellular location is the plastid. It localises to the chloroplast stroma. It carries out the reaction Hydrolysis of proteins to small peptides in the presence of ATP and magnesium. alpha-casein is the usual test substrate. In the absence of ATP, only oligopeptides shorter than five residues are hydrolyzed (such as succinyl-Leu-Tyr-|-NHMec, and Leu-Tyr-Leu-|-Tyr-Trp, in which cleavage of the -Tyr-|-Leu- and -Tyr-|-Trp bonds also occurs).. In terms of biological role, cleaves peptides in various proteins in a process that requires ATP hydrolysis. Has a chymotrypsin-like activity. Plays a major role in the degradation of misfolded proteins. The chain is ATP-dependent Clp protease proteolytic subunit from Liriodendron tulipifera (Tuliptree).